Here is a 193-residue protein sequence, read N- to C-terminus: Peptidyl-tRNA hydrolase (193 aa).

Tyr-17 serves as a coordination point for tRNA. His-22 functions as the Proton acceptor in the catalytic mechanism. Positions 68, 70, and 116 each coordinate tRNA.

This sequence belongs to the PTH family. In terms of assembly, monomer.

It localises to the cytoplasm. It carries out the reaction an N-acyl-L-alpha-aminoacyl-tRNA + H2O = an N-acyl-L-amino acid + a tRNA + H(+). Functionally, hydrolyzes ribosome-free peptidyl-tRNAs (with 1 or more amino acids incorporated), which drop off the ribosome during protein synthesis, or as a result of ribosome stalling. In terms of biological role, catalyzes the release of premature peptidyl moieties from peptidyl-tRNA molecules trapped in stalled 50S ribosomal subunits, and thus maintains levels of free tRNAs and 50S ribosomes. This chain is Peptidyl-tRNA hydrolase, found in Acinetobacter baumannii (strain AB0057).